Consider the following 29-residue polypeptide: Potassium channel toxin alpha-KTx 20.1 (29 aa).

3 disulfide bridges follow: Cys2-Cys20, Cys7-Cys24, and Cys11-Cys26.

This sequence belongs to the short scorpion toxin superfamily. Potassium channel inhibitor family. Alpha-KTx 20 subfamily. As to expression, expressed by the venom gland.

Its subcellular location is the secreted. In terms of biological role, reduces potassium currents through Kv1.2/KCNA2 and Kv1.3/KCNA3 voltage-gated potassium channels. This Tityus trivittatus (Argentinean scorpion) protein is Potassium channel toxin alpha-KTx 20.1.